A 450-amino-acid chain; its full sequence is Bestrophin homolog 1 (450 aa).

The Cytoplasmic segment spans residues 1-31 (MTINYHKEIMTSHPWTFFLLLFKWKGSIWKA). A helical transmembrane segment spans residues 32–51 (VYMETIIFLICYGIISVIYK). The Extracellular segment spans residues 52–60 (TAMGESSQR). Residues 61 to 82 (TFESLVRYFDKRLSYIPLEFVL) traverse the membrane as a helical segment. Topologically, residues 83 to 242 (GFFVTTVVNR…DWVPLPLMYP (160 aa)) are cytoplasmic. The chain crosses the membrane as a helical span at residues 243–260 (QLVCLAVNLYFLVSIIAR). Over 261–278 (QLVIEKHKMVDEVDVYFP) the chain is Extracellular. The chain crosses the membrane as a helical span at residues 279–292 (VMTFLQFIFYMGWL). Residues 293–450 (KVIDVMLNPF…WKIPTNPQKF (158 aa)) are Cytoplasmic-facing. Residues N300, D305, and D308 each contribute to the Ca(2+) site.

This sequence belongs to the anion channel-forming bestrophin (TC 1.A.46) family. Calcium-sensitive chloride channel subfamily. As to quaternary structure, forms oligomers.

It localises to the cell membrane. It catalyses the reaction chloride(in) = chloride(out). Ligand-gated anion channel that allows the movement of chloride monoatomic anions across cell membranes when activated by Calcium (Ca2+). In Caenorhabditis elegans, this protein is Bestrophin homolog 1 (best-1).